A 328-amino-acid polypeptide reads, in one-letter code: Biotin synthase (328 aa).

Residues 48-278 (FTGNSASLCS…GKSLSVCGGR (231 aa)) enclose the Radical SAM core domain. Cys-66, Cys-70, and Cys-73 together coordinate [4Fe-4S] cluster. Ser-143 and Cys-203 together coordinate [2Fe-2S] cluster.

This sequence belongs to the radical SAM superfamily. Biotin synthase family. In terms of assembly, homodimer. [4Fe-4S] cluster serves as cofactor. The cofactor is [2Fe-2S] cluster.

The catalysed reaction is (4R,5S)-dethiobiotin + (sulfur carrier)-SH + 2 reduced [2Fe-2S]-[ferredoxin] + 2 S-adenosyl-L-methionine = (sulfur carrier)-H + biotin + 2 5'-deoxyadenosine + 2 L-methionine + 2 oxidized [2Fe-2S]-[ferredoxin]. Its pathway is cofactor biosynthesis; biotin biosynthesis; biotin from 7,8-diaminononanoate: step 2/2. Its function is as follows. Catalyzes the conversion of dethiobiotin (DTB) to biotin by the insertion of a sulfur atom into dethiobiotin via a radical-based mechanism. The chain is Biotin synthase from Pelobacter propionicus (strain DSM 2379 / NBRC 103807 / OttBd1).